The chain runs to 689 residues: DNA ligase (689 aa).

NAD(+) contacts are provided by residues 40–44 (DAEYD), 89–90 (SL), and E121. The N6-AMP-lysine intermediate role is filled by K123. Positions 144, 179, 295, and 319 each coordinate NAD(+). Zn(2+) contacts are provided by C413, C416, C431, and C437. One can recognise a BRCT domain in the interval 610-689 (REQSSLTGKI…AEWLTLVRDI (80 aa)).

This sequence belongs to the NAD-dependent DNA ligase family. LigA subfamily. Mg(2+) is required as a cofactor. Mn(2+) serves as cofactor.

It catalyses the reaction NAD(+) + (deoxyribonucleotide)n-3'-hydroxyl + 5'-phospho-(deoxyribonucleotide)m = (deoxyribonucleotide)n+m + AMP + beta-nicotinamide D-nucleotide.. Functionally, DNA ligase that catalyzes the formation of phosphodiester linkages between 5'-phosphoryl and 3'-hydroxyl groups in double-stranded DNA using NAD as a coenzyme and as the energy source for the reaction. It is essential for DNA replication and repair of damaged DNA. This is DNA ligase from Rickettsia bellii (strain OSU 85-389).